The sequence spans 185 residues: Threonylcarbamoyl-AMP synthase (185 aa).

Residues 5–185 (ADRIADAVAA…DLQSGETLRR (181 aa)) form the YrdC-like domain.

This sequence belongs to the SUA5 family. TsaC subfamily.

It localises to the cytoplasm. It carries out the reaction L-threonine + hydrogencarbonate + ATP = L-threonylcarbamoyladenylate + diphosphate + H2O. Its function is as follows. Required for the formation of a threonylcarbamoyl group on adenosine at position 37 (t(6)A37) in tRNAs that read codons beginning with adenine. Catalyzes the conversion of L-threonine, HCO(3)(-)/CO(2) and ATP to give threonylcarbamoyl-AMP (TC-AMP) as the acyladenylate intermediate, with the release of diphosphate. This is Threonylcarbamoyl-AMP synthase from Chromohalobacter salexigens (strain ATCC BAA-138 / DSM 3043 / CIP 106854 / NCIMB 13768 / 1H11).